The primary structure comprises 578 residues: Isocitrate dehydrogenase kinase/phosphatase (578 aa).

ATP is bound by residues 315-321 (APGIRGM) and lysine 336. Aspartate 371 is an active-site residue.

It belongs to the AceK family.

It localises to the cytoplasm. The catalysed reaction is L-seryl-[isocitrate dehydrogenase] + ATP = O-phospho-L-seryl-[isocitrate dehydrogenase] + ADP + H(+). Bifunctional enzyme which can phosphorylate or dephosphorylate isocitrate dehydrogenase (IDH) on a specific serine residue. This is a regulatory mechanism which enables bacteria to bypass the Krebs cycle via the glyoxylate shunt in response to the source of carbon. When bacteria are grown on glucose, IDH is fully active and unphosphorylated, but when grown on acetate or ethanol, the activity of IDH declines drastically concomitant with its phosphorylation. In Escherichia coli (strain K12 / MC4100 / BW2952), this protein is Isocitrate dehydrogenase kinase/phosphatase.